A 357-amino-acid polypeptide reads, in one-letter code: SNF1-related protein kinase regulatory subunit gamma-like PV42b (357 aa).

4 consecutive CBS domains span residues 16–97 (MIDK…DGES), 113–185 (HCPE…SSQL), 198–273 (AIHN…WLPL), and 293–351 (STPG…ALLS).

Belongs to the 5'-AMP-activated protein kinase gamma subunit family. Expressed highly in rosette leaves, cauline leaves, open flowers, developing siliques and dry seeds, but at a low level in stems and floral buds.

Its function is as follows. Plays redundant role with PV42a in regulating male gametogenesis and pollen tube guidance. This chain is SNF1-related protein kinase regulatory subunit gamma-like PV42b (PV42B), found in Arabidopsis thaliana (Mouse-ear cress).